The chain runs to 313 residues: Endo-beta-N-acetylglucosaminidase H (313 aa).

Positions 1 to 42 form a signal peptide, or 44; that stretch reads MFTPVRRRVRTAALALSAAAALVLGSTAASGASATPSPAPAP. In terms of domain architecture, GH18 spans 51–307; that stretch reads PTSVAYVEVN…SAFTRELYGS (257 aa). The Proton donor role is filled by Glu174.

The protein belongs to the glycosyl hydrolase 18 family.

It carries out the reaction an N(4)-(oligosaccharide-(1-&gt;3)-[oligosaccharide-(1-&gt;6)]-beta-D-Man-(1-&gt;4)-beta-D-GlcNAc-(1-&gt;4)-alpha-D-GlcNAc)-L-asparaginyl-[protein] + H2O = an oligosaccharide-(1-&gt;3)-[oligosaccharide-(1-&gt;6)]-beta-D-Man-(1-&gt;4)-D-GlcNAc + N(4)-(N-acetyl-beta-D-glucosaminyl)-L-asparaginyl-[protein]. Functionally, cleaves asparagine-linked oligomannose and hybrid, but not complex, oligosaccharides from glycoproteins. The sequence is that of Endo-beta-N-acetylglucosaminidase H from Streptomyces plicatus.